The primary structure comprises 141 residues: GTP cyclohydrolase-2 (141 aa).

1–3 contributes to the GTP binding site; that stretch reads HSE. Zn(2+)-binding residues include C4, C15, and C17. GTP is bound by residues Q20, 41–43, and T63; that span reads EGR. The active-site Proton acceptor is D75. The active-site Nucleophile is R77. Residues T98 and K103 each contribute to the GTP site.

It belongs to the GTP cyclohydrolase II family. Zn(2+) is required as a cofactor.

It carries out the reaction GTP + 4 H2O = 2,5-diamino-6-hydroxy-4-(5-phosphoribosylamino)-pyrimidine + formate + 2 phosphate + 3 H(+). It participates in cofactor biosynthesis; riboflavin biosynthesis; 5-amino-6-(D-ribitylamino)uracil from GTP: step 1/4. Functionally, catalyzes the conversion of GTP to 2,5-diamino-6-ribosylamino-4(3H)-pyrimidinone 5'-phosphate (DARP), formate and pyrophosphate. This Sulfurospirillum multivorans (Dehalospirillum multivorans) protein is GTP cyclohydrolase-2 (ribA).